A 50-amino-acid chain; its full sequence is Conotoxin Bu13 (50 aa).

A signal peptide is located at residue Ala1. A propeptide spanning residues 2–24 (EDSRGTQLHRALRKTTKLSLSIR) is cleaved from the precursor. 3 disulfides stabilise this stretch: Cys25-Cys40, Cys32-Cys44, and Cys39-Cys49.

This sequence belongs to the conotoxin O1 superfamily. Expressed by the venom duct.

It localises to the secreted. This chain is Conotoxin Bu13, found in Conus bullatus (Bubble cone).